The following is a 580-amino-acid chain: NADH-quinone oxidoreductase subunit C/D (580 aa).

The NADH dehydrogenase I subunit C stretch occupies residues 1–171 (MSLDQAIPEA…PPFVLTDRLF (171 aa)). Positions 195–580 (ELMVLNFGPH…IDFVMSDVDR (386 aa)) are NADH dehydrogenase I subunit D.

The protein in the N-terminal section; belongs to the complex I 30 kDa subunit family. It in the C-terminal section; belongs to the complex I 49 kDa subunit family. NDH-1 is composed of 13 different subunits. Subunits NuoB, CD, E, F, and G constitute the peripheral sector of the complex.

The protein localises to the cell inner membrane. It carries out the reaction a quinone + NADH + 5 H(+)(in) = a quinol + NAD(+) + 4 H(+)(out). In terms of biological role, NDH-1 shuttles electrons from NADH, via FMN and iron-sulfur (Fe-S) centers, to quinones in the respiratory chain. The immediate electron acceptor for the enzyme in this species is believed to be ubiquinone. Couples the redox reaction to proton translocation (for every two electrons transferred, four hydrogen ions are translocated across the cytoplasmic membrane), and thus conserves the redox energy in a proton gradient. This Cereibacter sphaeroides (strain ATCC 17029 / ATH 2.4.9) (Rhodobacter sphaeroides) protein is NADH-quinone oxidoreductase subunit C/D.